The sequence spans 155 residues: Molybdopterin synthase catalytic subunit 2 (155 aa).

Residues 101-102 (HR), Lys-117, and 124-126 (KKE) contribute to the substrate site.

It belongs to the MoaE family. MOCS2B subfamily. As to quaternary structure, heterotetramer; composed of 2 small (MOCS2A) and 2 large (MOCS2B) subunits.

It localises to the cytoplasm. The catalysed reaction is 2 [molybdopterin-synthase sulfur-carrier protein]-C-terminal-Gly-aminoethanethioate + cyclic pyranopterin phosphate + H2O = molybdopterin + 2 [molybdopterin-synthase sulfur-carrier protein]-C-terminal Gly-Gly + 2 H(+). Its pathway is cofactor biosynthesis; molybdopterin biosynthesis. Functionally, catalytic subunit of the molybdopterin synthase complex, a complex that catalyzes the conversion of precursor Z into molybdopterin. Acts by mediating the incorporation of 2 sulfur atoms from thiocarboxylated MOCS2A into precursor Z to generate a dithiolene group. The chain is Molybdopterin synthase catalytic subunit 2 from Aedes aegypti (Yellowfever mosquito).